The following is a 668-amino-acid chain: DNA ligase (668 aa).

NAD(+) is bound by residues 37–41 (DAVYD), 86–87 (SM), and Glu-116. The active-site N6-AMP-lysine intermediate is Lys-118. Arg-139, Glu-173, Lys-288, and Lys-312 together coordinate NAD(+). Residues Cys-406, Cys-409, Cys-424, and Cys-429 each coordinate Zn(2+). Residues 590–668 (APDNFFKEKT…EQEAIAKIEK (79 aa)) enclose the BRCT domain.

It belongs to the NAD-dependent DNA ligase family. LigA subfamily. Mg(2+) is required as a cofactor. The cofactor is Mn(2+).

The catalysed reaction is NAD(+) + (deoxyribonucleotide)n-3'-hydroxyl + 5'-phospho-(deoxyribonucleotide)m = (deoxyribonucleotide)n+m + AMP + beta-nicotinamide D-nucleotide.. In terms of biological role, DNA ligase that catalyzes the formation of phosphodiester linkages between 5'-phosphoryl and 3'-hydroxyl groups in double-stranded DNA using NAD as a coenzyme and as the energy source for the reaction. It is essential for DNA replication and repair of damaged DNA. In Lactobacillus gasseri (strain ATCC 33323 / DSM 20243 / BCRC 14619 / CIP 102991 / JCM 1131 / KCTC 3163 / NCIMB 11718 / NCTC 13722 / AM63), this protein is DNA ligase.